Reading from the N-terminus, the 404-residue chain is Na(+)/H(+) antiporter NhaA 2 (404 aa).

11 helical membrane passes run 24–44 (GIIL…SFSG), 67–87 (VLHW…GMEI), 103–123 (ILPI…YALF), 132–152 (GWGI…SLVA), 161–181 (VFLT…IAIF), 184–204 (SQIS…LILA), 216–236 (IILG…ATIA), 266–286 (TPWS…GIII), 303–323 (IIFG…FILI), 339–359 (LYGA…VSSL), and 372–392 (MCIM…FKFI).

The protein belongs to the NhaA Na(+)/H(+) (TC 2.A.33) antiporter family.

The protein localises to the cell membrane. It carries out the reaction Na(+)(in) + 2 H(+)(out) = Na(+)(out) + 2 H(+)(in). Functionally, na(+)/H(+) antiporter that extrudes sodium in exchange for external protons. The protein is Na(+)/H(+) antiporter NhaA 2 of Clostridium beijerinckii (strain ATCC 51743 / NCIMB 8052) (Clostridium acetobutylicum).